The chain runs to 157 residues: Large ribosomal subunit protein uL11 (157 aa).

This sequence belongs to the universal ribosomal protein uL11 family.

Functionally, this protein binds directly to 26S ribosomal RNA. This is Large ribosomal subunit protein uL11 (RPL12) from Chlamydomonas reinhardtii (Chlamydomonas smithii).